The primary structure comprises 426 residues: Serine/threonine-protein kinase ssn3 (426 aa).

Positions 41-368 (YHIVGFISSG…AQEALEHPYF (328 aa)) constitute a Protein kinase domain. Residues 47 to 55 (ISSGTYGRV) and Lys71 each bind ATP. Catalysis depends on Asp173, which acts as the Proton acceptor. Positions 390–426 (RVTQDDNDIRSGSLPGTKRSGLPDDSLMGRAAKRLKE) are disordered.

The protein belongs to the protein kinase superfamily. CMGC Ser/Thr protein kinase family. CDC2/CDKX subfamily. Component of the srb8-11 complex, a regulatory module of the Mediator complex. The cofactor is Mg(2+).

The protein localises to the nucleus. The catalysed reaction is L-seryl-[protein] + ATP = O-phospho-L-seryl-[protein] + ADP + H(+). It catalyses the reaction L-threonyl-[protein] + ATP = O-phospho-L-threonyl-[protein] + ADP + H(+). The enzyme catalyses [DNA-directed RNA polymerase] + ATP = phospho-[DNA-directed RNA polymerase] + ADP + H(+). Its function is as follows. Component of the srb8-11 complex. The srb8-11 complex is a regulatory module of the Mediator complex which is itself involved in regulation of basal and activated RNA polymerase II-dependent transcription. The srb8-11 complex may be involved in the transcriptional repression of a subset of genes regulated by Mediator. It may inhibit the association of the Mediator complex with RNA polymerase II to form the holoenzyme complex. The srb8-11 complex phosphorylates the C-terminal domain (CTD) of the largest subunit of RNA polymerase II. The sequence is that of Serine/threonine-protein kinase ssn3 (ssn3) from Aspergillus clavatus (strain ATCC 1007 / CBS 513.65 / DSM 816 / NCTC 3887 / NRRL 1 / QM 1276 / 107).